A 969-amino-acid chain; its full sequence is Glycine dehydrogenase (decarboxylating) (969 aa).

The residue at position 716 (K716) is an N6-(pyridoxal phosphate)lysine.

The protein belongs to the GcvP family. The glycine cleavage system is composed of four proteins: P, T, L and H. Pyridoxal 5'-phosphate is required as a cofactor.

It carries out the reaction N(6)-[(R)-lipoyl]-L-lysyl-[glycine-cleavage complex H protein] + glycine + H(+) = N(6)-[(R)-S(8)-aminomethyldihydrolipoyl]-L-lysyl-[glycine-cleavage complex H protein] + CO2. Its function is as follows. The glycine cleavage system catalyzes the degradation of glycine. The P protein binds the alpha-amino group of glycine through its pyridoxal phosphate cofactor; CO(2) is released and the remaining methylamine moiety is then transferred to the lipoamide cofactor of the H protein. The sequence is that of Glycine dehydrogenase (decarboxylating) from Shewanella woodyi (strain ATCC 51908 / MS32).